An 800-amino-acid chain; its full sequence is DEP domain-containing protein 1A (800 aa).

The DEP domain occupies 24-108 (FRAGMPLKKH…DNSQLYRFPS (85 aa)). Disordered regions lie at residues 147-173 (ETLE…RSRE), 306-326 (SQPG…AKNP), and 459-485 (INTS…ARAR). The Rho-GAP domain occupies 281–321 (PLLTYQYYELFVNILVMCGYITTPKSQPGKRKNQEEPNCPQ). Low complexity predominate over residues 459 to 468 (INTSGSSVSS).

This is DEP domain-containing protein 1A (depdc1a) from Danio rerio (Zebrafish).